We begin with the raw amino-acid sequence, 190 residues long: Somatotropin (190 aa).

Residue His19 participates in Zn(2+) binding. Cys52 and Cys163 form a disulfide bridge. Ser105 is subject to Phosphoserine. Residue Glu172 participates in Zn(2+) binding. A disulfide bond links Cys180 and Cys188.

This sequence belongs to the somatotropin/prolactin family.

The protein localises to the secreted. In terms of biological role, plays an important role in growth control. Its major role in stimulating body growth is to stimulate the liver and other tissues to secrete IGF1. It stimulates both the differentiation and proliferation of myoblasts. It also stimulates amino acid uptake and protein synthesis in muscle and other tissues. This chain is Somatotropin (GH1), found in Balaenoptera borealis (Sei whale).